The sequence spans 239 residues: Ribosomal RNA small subunit methyltransferase G (239 aa).

S-adenosyl-L-methionine-binding positions include glycine 78, phenylalanine 83, alanine 129–glutamate 130, and arginine 148.

It belongs to the methyltransferase superfamily. RNA methyltransferase RsmG family.

It is found in the cytoplasm. Functionally, specifically methylates the N7 position of a guanine in 16S rRNA. The protein is Ribosomal RNA small subunit methyltransferase G of Alkaliphilus metalliredigens (strain QYMF).